The primary structure comprises 537 residues: Arginine--tRNA ligase (537 aa).

The 'HIGH' region motif lies at 113-123 (ANPTGRIHLGH).

It belongs to the class-I aminoacyl-tRNA synthetase family. Monomer.

Its subcellular location is the cytoplasm. The catalysed reaction is tRNA(Arg) + L-arginine + ATP = L-arginyl-tRNA(Arg) + AMP + diphosphate. This Mycoplasma genitalium (strain ATCC 33530 / DSM 19775 / NCTC 10195 / G37) (Mycoplasmoides genitalium) protein is Arginine--tRNA ligase (argS).